Here is a 521-residue protein sequence, read N- to C-terminus: Tigger transposable element-derived protein 6 (521 aa).

One can recognise an HTH psq-type domain in the interval asparagine 3–phenylalanine 54. DNA-binding regions (H-T-H motif) lie at residues lysine 30–aspartate 50 and serine 99–arginine 130. The HTH CENPB-type domain occupies glutamine 66–alanine 137. One can recognise a DDE-1 domain in the interval tyrosine 170 to tryptophan 372.

Belongs to the tigger transposable element derived protein family.

The protein localises to the nucleus. The polypeptide is Tigger transposable element-derived protein 6 (TIGD6) (Homo sapiens (Human)).